The sequence spans 452 residues: TKKVKEVTKEYEVQNKHKPLWTRDPKDVTKEEYAAFYKAISNDWEDPMATKHFSVEGQLEFRSIMFVPKRAPFDMFEPNKKRNNIKLYVRRVFIMDNCEDLCPDWLGFVKGVVDSEDLPLNISRENLQQNKILKVIRKNIVKKCLEMFDEVAENKEDYKQFYEQFGKNIKLGIHEDTANPKKLMEFLRFYSTESGLEMTTLKDYVTRMKEGQKSIYYITGDSKKKLESSPFIEQARRRGLEVLFMTEPIDEYVMQQVKDFEDKKFACLTKEGVHFEESEEEKQQREEEKAACEKRCKTMKEVLGDKVEKVTVSDRLSTSPCILVTSEFGWSAHMEQIMRNQAVRDSSMSAYMMSKKTMELNPRHPIIKVLRRRVEADENDKAVKDLVFLLFDTSLLTSGFQLEDPTGYAKRINRMIKLGLSLDEEEEAAEATVVETAPAEVTVGTSSMEQVD.

Arginine 124 is an ATP binding site. Residues 448–452 (MEQVD) carry the TPR repeat-binding motif.

This sequence belongs to the heat shock protein 90 family. In terms of assembly, homodimer.

The protein localises to the cytoplasm. Its function is as follows. Molecular chaperone that promotes the maturation, structural maintenance and proper regulation of specific target proteins involved for instance in cell cycle control and signal transduction. Undergoes a functional cycle that is linked to its ATPase activity. This cycle probably induces conformational changes in the client proteins, thereby causing their activation. Interacts dynamically with various co-chaperones that modulate its substrate recognition, ATPase cycle and chaperone function. The protein is Heat shock protein 83 (HSP83) of Leishmania donovani.